We begin with the raw amino-acid sequence, 600 residues long: L-galactono-1,4-lactone dehydrogenase, mitochondrial (600 aa).

Residues 1–25 constitute a mitochondrion transit peptide; sequence MLRSLLLRRSNARSLRPPFPPLRTL. Residues 16-51 form a disordered region; it reads RPPFPPLRTLCTSGQTLTPAPPPPPPPPPPISSSAS. Residues 26-91 constitute a propeptide, removed in mature form; it reads CTSGQTLTPA…AKHKKAQIFR (66 aa). Pro residues predominate over residues 34–46; that stretch reads PAPPPPPPPPPPI. The helical transmembrane segment at 58–74 threads the bilayer; that stretch reads YAGYAALALFSGAATYF. The FAD-binding PCMH-type domain maps to 108–279; it reads THEVQTRNFN…AEVTLQCVER (172 aa).

FAD is required as a cofactor.

The protein localises to the mitochondrion membrane. The catalysed reaction is L-galactono-1,4-lactone + 4 Fe(III)-[cytochrome c] = L-dehydroascorbate + 4 Fe(II)-[cytochrome c] + 5 H(+). Its pathway is cofactor biosynthesis; L-ascorbate biosynthesis. With respect to regulation, inhibited by sulfhydryl-modifying agents such as N-ethylmaleimide, monoiodoacetic acid and p-hydroxymercuribenzoic acid. No inhibition by riboflavin and lycorine. Functionally, involved in the biosynthesis of ascorbic acid. Uses L-galactono-1,4-lactone as substrate, but not L-gulono-1,4-lactone, D-galactono-1,4-lactone, D-gulono-1,4-lactone, D-erythronic-1,4-lactone, D-xylonic-1,4-lactone, L-mannono-1,4-lactone, D-galactonic acid, D-glucuronic acid or D-gluconic acid. FAD, NAD, NADP and O(2) cannot act as electron acceptor. The polypeptide is L-galactono-1,4-lactone dehydrogenase, mitochondrial (Brassica oleracea (Wild cabbage)).